Here is a 358-residue protein sequence, read N- to C-terminus: Alpha-ketoglutarate-dependent L-arginine hydroxylase (358 aa).

The disordered stretch occupies residues 1–21 (MTESPTTHHGAAPPDSVATPV). Residues 117-135 (LSFLLMLYAGLLGDVFGWA) form a helical membrane-spanning segment. L-arginine is bound at residue 156–158 (LVS). Fe cation-binding residues include His-168 and Glu-170. Thr-194 is a binding site for 2-oxoglutarate. 268–270 (DGD) serves as a coordination point for L-arginine. A Fe cation-binding site is contributed by His-316. Residues Arg-330 and Arg-334 each coordinate 2-oxoglutarate. Arg-334 contributes to the L-arginine binding site.

Belongs to the clavaminate synthase family. Requires Fe cation as cofactor.

The protein resides in the membrane. It carries out the reaction L-arginine + 2-oxoglutarate + O2 = (2S,3S)-hydroxyarginine + succinate + CO2. The protein operates within antibiotic biosynthesis. Its function is as follows. Involved in the biosynthesis of capreomycidine, an unusual amino acid used by non-ribosomal peptide synthases (NRPS) to make the tuberactinomycin class of peptide antibiotics such as viomycin and capreomycin. Catalyzes the stereospecific hydroxylation of the C3 of (2S)-arginine to generate (3S)-hydroxy-(2S)-arginine. Usually clavaminic acid synthase-like oxygenases catalyze the formation of threo diastereomers, however VioC produces the erythro diastereomer of beta-carbon-hydroxylated L-arginine. It exerts a broad substrate specificity by accepting the analogs L-homoarginine and L-canavanine for the beta-carbon hydroxylation. The polypeptide is Alpha-ketoglutarate-dependent L-arginine hydroxylase (vioC) (Streptomyces vinaceus).